A 505-amino-acid polypeptide reads, in one-letter code: 11S globulin seed storage protein 1 (505 aa).

The N-terminal stretch at Met-1–Ala-24 is a signal peptide. 2 disulfide bridges follow: Cys-37–Cys-70 and Cys-113–Cys-323. The Cupin type-1 1 domain maps to Leu-42–Arg-255. 3 igE-binding regions span residues Glu-118 to Phe-132, Glu-208 to Arg-219, and Phe-238 to Val-249. The tract at residues Gly-193–Asn-232 is disordered. Residues Arg-219–Arg-228 are compositionally biased toward basic and acidic residues. Positions Trp-282 to Asn-316 are enriched in basic and acidic residues. Residues Trp-282–Leu-318 form a disordered region. The short motif at Asn-316–Thr-321 is the NGXEET; peptidase recognition motif element. The region spanning Glu-329–Arg-478 is the Cupin type-1 2 domain.

Belongs to the 11S seed storage protein (globulins) family. In terms of assembly, homohexamer. Each subunit is composed of an acidic and a basic chain derived from a single precursor and linked by a disulfide bond. As to expression, expressed in seeds (at protein level). Expressed in seeds.

Seed storage protein. This chain is 11S globulin seed storage protein 1, found in Carya illinoinensis (Pecan).